The chain runs to 152 residues: Methylglyoxal synthase (152 aa).

The 148-residue stretch at 5 to 152 (TRTVQAQKHI…YQLYLQQRLK (148 aa)) folds into the MGS-like domain. Substrate-binding positions include histidine 19, lysine 23, 45–48 (TGTT), and 65–66 (SG). Catalysis depends on aspartate 71, which acts as the Proton donor/acceptor. A substrate-binding site is contributed by histidine 98.

It belongs to the methylglyoxal synthase family.

The catalysed reaction is dihydroxyacetone phosphate = methylglyoxal + phosphate. Catalyzes the formation of methylglyoxal from dihydroxyacetone phosphate. In Erwinia tasmaniensis (strain DSM 17950 / CFBP 7177 / CIP 109463 / NCPPB 4357 / Et1/99), this protein is Methylglyoxal synthase.